Reading from the N-terminus, the 357-residue chain is NAD-dependent protein deacetylase HST2 (357 aa).

Position 2 is an N-acetylserine (serine 2). Residues 5-284 (TASTEMSVRK…EQLVEELGWQ (280 aa)) enclose the Deacetylase sirtuin-type domain. NAD(+)-binding positions include 32-52 (GAGI…TGLY) and 115-118 (QNID). Histidine 135 (proton acceptor) is an active-site residue. 4 residues coordinate Zn(2+): cysteine 143, cysteine 146, cysteine 170, and cysteine 173. NAD(+)-binding positions include 223 to 225 (GTS), 248 to 250 (NLE), and serine 270. The segment covering 317-329 (LDQSEHESADKKD) has biased composition (basic and acidic residues). Residues 317–357 (LDQSEHESADKKDKKLQRLNGHDSDEDGASNSSSSQKAAKE) are disordered. Serine 340 carries the post-translational modification Phosphoserine.

It belongs to the sirtuin family. Class I subfamily. Homotrimer. Monomer. Homotrimeric in its unliganded state. Undergoes a trimer-monomer transition upon acetyl-lysine substrate binding. It depends on Zn(2+) as a cofactor.

Its subcellular location is the cytoplasm. It is found in the nucleus. It carries out the reaction N(6)-acetyl-L-lysyl-[protein] + NAD(+) + H2O = 2''-O-acetyl-ADP-D-ribose + nicotinamide + L-lysyl-[protein]. With respect to regulation, inhibited by ADP-ribose and nicotinamide. NAD-dependent histone deacetylase that is involved in nuclear silencing events. Derepresses subtelomeric silencing and increases repression in nucleolar (rDNA) silencing. Its function is negatively regulated by active nuclear export. In Saccharomyces cerevisiae (strain ATCC 204508 / S288c) (Baker's yeast), this protein is NAD-dependent protein deacetylase HST2 (HST2).